Consider the following 3748-residue polypeptide: Intermembrane lipid transfer protein VPS13C (3748 aa).

The Chorein N-terminal domain maps to 3-115; it reads LESVVADLLN…SLQDIKQKEL (113 aa). S132 carries the phosphoserine modification. Phosphothreonine is present on T613. S618 carries the post-translational modification Phosphoserine. T623 carries the phosphothreonine modification. Phosphoserine occurs at positions 736, 841, 871, and 873. Residues 876 to 882 carry the FFAT motif; sequence EFFDAED. At T1968 the chain carries Phosphothreonine. A phosphoserine mark is found at S1974 and S2442. Residues 2410 to 3304 form a required for late endosome/lysosome localization region; sequence DYSLKDRAPF…IQQDIDALNT (895 aa). In terms of domain architecture, SHR-BD spans 2760–3012; sequence ELSVFSPYWL…LFAWADPTGI (253 aa). Residues 3305 to 3748 form a required for lipid droplet localization region; sequence ELMESSMTDM…VKLLRPQGPS (444 aa). R3514 and R3521 each carry omega-N-methylarginine. N6-acetyllysine is present on K3533.

It belongs to the VPS13 family.

It is found in the mitochondrion outer membrane. It localises to the lipid droplet. The protein resides in the endoplasmic reticulum membrane. Its subcellular location is the lysosome membrane. The protein localises to the late endosome membrane. In terms of biological role, mediates the transfer of lipids between membranes at organelle contact sites. Necessary for proper mitochondrial function and maintenance of mitochondrial transmembrane potential. Involved in the regulation of PINK1/PRKN-mediated mitophagy in response to mitochondrial depolarization. In Mus musculus (Mouse), this protein is Intermembrane lipid transfer protein VPS13C.